The following is a 343-amino-acid chain: UBP1-associated proteins 1A (343 aa).

A disordered region spans residues 1-61; that stretch reads MAKTLDKSKK…SESDNEFDPE (61 aa). Residues 28–49 show a composition bias toward low complexity; that stretch reads NKQQQQPESSTPYSSSSSSSDS. The span at 50–61 shows a compositional bias: acidic residues; that stretch reads SDSESDNEFDPE. An RRM domain is found at 104–181; the sequence is RKIFVYGLPW…RTATCQLASM (78 aa). The segment at 312-343 is disordered; that stretch reads STYPDSDAGGKRGTGKDSDAGGSSFHGYSNYS. The segment covering 319–330 has biased composition (basic and acidic residues); sequence AGGKRGTGKDSD.

In terms of assembly, interacts with UBA1A, UBA2A, UBP1A, UBP1B and UBP1C.

The protein resides in the nucleus. Functionally, acts as a component of a complex regulating the turnover of mRNAs in the nucleus. Binds with high affinity to RNA molecules that contain U-rich sequences in 3'-UTRs. May function in complex with UBP1 and contribute to the stabilization of mRNAs in the nucleus. However, unlike UBP1, UBA1A does not stimulate pre-mRNA splicing. The protein is UBP1-associated proteins 1A (UBA1A) of Arabidopsis thaliana (Mouse-ear cress).